Here is a 557-residue protein sequence, read N- to C-terminus: Formate--tetrahydrofolate ligase 2 (557 aa).

An ATP-binding site is contributed by threonine 66 to threonine 73.

Belongs to the formate--tetrahydrofolate ligase family.

The enzyme catalyses (6S)-5,6,7,8-tetrahydrofolate + formate + ATP = (6R)-10-formyltetrahydrofolate + ADP + phosphate. It functions in the pathway one-carbon metabolism; tetrahydrofolate interconversion. This Streptococcus pyogenes serotype M4 (strain MGAS10750) protein is Formate--tetrahydrofolate ligase 2.